The chain runs to 135 residues: Hydroxylaminobenzene mutase HabA (135 aa).

Helical transmembrane passes span 5–25 (LFAS…LVPV), 33–55 (VAGH…LWPY), 67–87 (FWLL…AALW), and 113–133 (FLLF…LIGI).

It is found in the cell membrane. The catalysed reaction is N-phenylhydroxylamine = 2-aminophenol. Catalyzes the rearrangement of hydroxylaminobenzene to 2-aminophenol. Involved in the degradation of nitrobenzene. The protein is Hydroxylaminobenzene mutase HabA (habA) of Ectopseudomonas oleovorans (Pseudomonas oleovorans).